A 248-amino-acid chain; its full sequence is ATP synthase subunit a, chloroplastic (248 aa).

5 helical membrane-spanning segments follow: residues 37–57, 96–116, 135–155, 200–220, and 221–241; these read AQVL…AVLA, VPFI…GALF, INTT…AGLH, LVVA…MMFL, and GLFT…AYIG.

It belongs to the ATPase A chain family. In terms of assembly, F-type ATPases have 2 components, CF(1) - the catalytic core - and CF(0) - the membrane proton channel. CF(1) has five subunits: alpha(3), beta(3), gamma(1), delta(1), epsilon(1). CF(0) has four main subunits: a, b, b' and c.

The protein localises to the plastid. It is found in the chloroplast thylakoid membrane. Functionally, key component of the proton channel; it plays a direct role in the translocation of protons across the membrane. This Marchantia polymorpha (Common liverwort) protein is ATP synthase subunit a, chloroplastic.